A 298-amino-acid chain; its full sequence is Protease HtpX homolog (298 aa).

Transmembrane regions (helical) follow at residues 14–34 (VVLL…AGYL) and 39–59 (YAMG…SMIF). His143 contributes to the Zn(2+) binding site. Glu144 is an active-site residue. His147 contacts Zn(2+). A run of 2 helical transmembrane segments spans residues 158–178 (IAVA…RMLW) and 197–217 (IITL…ASLI). Glu226 provides a ligand contact to Zn(2+).

This sequence belongs to the peptidase M48B family. The cofactor is Zn(2+).

The protein localises to the cell membrane. This Streptococcus pyogenes serotype M28 (strain MGAS6180) protein is Protease HtpX homolog.